A 299-amino-acid polypeptide reads, in one-letter code: ATP phosphoribosyltransferase (299 aa).

The protein belongs to the ATP phosphoribosyltransferase family. Long subfamily. The cofactor is Mg(2+).

The protein resides in the cytoplasm. It carries out the reaction 1-(5-phospho-beta-D-ribosyl)-ATP + diphosphate = 5-phospho-alpha-D-ribose 1-diphosphate + ATP. It participates in amino-acid biosynthesis; L-histidine biosynthesis; L-histidine from 5-phospho-alpha-D-ribose 1-diphosphate: step 1/9. With respect to regulation, feedback inhibited by histidine. Functionally, catalyzes the condensation of ATP and 5-phosphoribose 1-diphosphate to form N'-(5'-phosphoribosyl)-ATP (PR-ATP). Has a crucial role in the pathway because the rate of histidine biosynthesis seems to be controlled primarily by regulation of HisG enzymatic activity. This is ATP phosphoribosyltransferase from Shewanella piezotolerans (strain WP3 / JCM 13877).